A 91-amino-acid polypeptide reads, in one-letter code: Cell division topological specificity factor (91 aa).

The protein belongs to the MinE family.

Prevents the cell division inhibition by proteins MinC and MinD at internal division sites while permitting inhibition at polar sites. This ensures cell division at the proper site by restricting the formation of a division septum at the midpoint of the long axis of the cell. This is Cell division topological specificity factor from Bradyrhizobium sp. (strain BTAi1 / ATCC BAA-1182).